A 71-amino-acid polypeptide reads, in one-letter code: UPF0435 protein SE_1565 (71 aa).

Belongs to the UPF0435 family.

This chain is UPF0435 protein SE_1565, found in Staphylococcus epidermidis (strain ATCC 12228 / FDA PCI 1200).